The sequence spans 390 residues: GTPase Obg (390 aa).

In terms of domain architecture, Obg spans Met-1–Leu-159. Residues Ala-160 to Asn-333 enclose the OBG-type G domain. GTP contacts are provided by residues Gly-166–Ser-173, Phe-191–Ile-195, Asp-213–Gly-216, Asn-283–Asp-286, and Ser-314–Ala-316. Mg(2+)-binding residues include Ser-173 and Thr-193. Positions Val-364 to Val-384 are enriched in acidic residues. The disordered stretch occupies residues Val-364–Arg-390.

This sequence belongs to the TRAFAC class OBG-HflX-like GTPase superfamily. OBG GTPase family. As to quaternary structure, monomer. The cofactor is Mg(2+).

It localises to the cytoplasm. Its function is as follows. An essential GTPase which binds GTP, GDP and possibly (p)ppGpp with moderate affinity, with high nucleotide exchange rates and a fairly low GTP hydrolysis rate. Plays a role in control of the cell cycle, stress response, ribosome biogenesis and in those bacteria that undergo differentiation, in morphogenesis control. The polypeptide is GTPase Obg (Yersinia pestis).